Reading from the N-terminus, the 259-residue chain is Glutamate 5-kinase (259 aa).

Residue Lys18 participates in ATP binding. Positions 54, 141, and 153 each coordinate substrate. 173 to 174 contacts ATP; sequence SD.

It belongs to the glutamate 5-kinase family.

It is found in the cytoplasm. It catalyses the reaction L-glutamate + ATP = L-glutamyl 5-phosphate + ADP. It functions in the pathway amino-acid biosynthesis; L-proline biosynthesis; L-glutamate 5-semialdehyde from L-glutamate: step 1/2. Catalyzes the transfer of a phosphate group to glutamate to form L-glutamate 5-phosphate. This Clavibacter sepedonicus (Clavibacter michiganensis subsp. sepedonicus) protein is Glutamate 5-kinase.